The chain runs to 258 residues: Imidazole glycerol phosphate synthase subunit HisF (258 aa).

Residues aspartate 11 and aspartate 130 contribute to the active site.

Belongs to the HisA/HisF family. Heterodimer of HisH and HisF.

It is found in the cytoplasm. The enzyme catalyses 5-[(5-phospho-1-deoxy-D-ribulos-1-ylimino)methylamino]-1-(5-phospho-beta-D-ribosyl)imidazole-4-carboxamide + L-glutamine = D-erythro-1-(imidazol-4-yl)glycerol 3-phosphate + 5-amino-1-(5-phospho-beta-D-ribosyl)imidazole-4-carboxamide + L-glutamate + H(+). It participates in amino-acid biosynthesis; L-histidine biosynthesis; L-histidine from 5-phospho-alpha-D-ribose 1-diphosphate: step 5/9. Functionally, IGPS catalyzes the conversion of PRFAR and glutamine to IGP, AICAR and glutamate. The HisF subunit catalyzes the cyclization activity that produces IGP and AICAR from PRFAR using the ammonia provided by the HisH subunit. This Azorhizobium caulinodans (strain ATCC 43989 / DSM 5975 / JCM 20966 / LMG 6465 / NBRC 14845 / NCIMB 13405 / ORS 571) protein is Imidazole glycerol phosphate synthase subunit HisF.